We begin with the raw amino-acid sequence, 308 residues long: Probable 5-dehydro-4-deoxyglucarate dehydratase (308 aa).

It belongs to the DapA family.

It carries out the reaction 5-dehydro-4-deoxy-D-glucarate + H(+) = 2,5-dioxopentanoate + CO2 + H2O. The protein operates within carbohydrate acid metabolism; D-glucarate degradation; 2,5-dioxopentanoate from D-glucarate: step 2/2. This chain is Probable 5-dehydro-4-deoxyglucarate dehydratase, found in Bacillus licheniformis (strain ATCC 14580 / DSM 13 / JCM 2505 / CCUG 7422 / NBRC 12200 / NCIMB 9375 / NCTC 10341 / NRRL NRS-1264 / Gibson 46).